The primary structure comprises 213 residues: NAD(P)H-hydrate epimerase (213 aa).

One can recognise a YjeF N-terminal domain in the interval 8 to 210 (MYNIEENGHA…KIGIPPEAEK (203 aa)). (6S)-NADPHX is bound at residue 55-59 (NNGGD). K(+) is bound by residues asparagine 56 and aspartate 122. Residues 126–132 (GTGITGE), tyrosine 137, and aspartate 155 each bind (6S)-NADPHX. Residue serine 158 participates in K(+) binding.

Belongs to the NnrE/AIBP family. K(+) is required as a cofactor.

The catalysed reaction is (6R)-NADHX = (6S)-NADHX. The enzyme catalyses (6R)-NADPHX = (6S)-NADPHX. Functionally, catalyzes the epimerization of the S- and R-forms of NAD(P)HX, a damaged form of NAD(P)H that is a result of enzymatic or heat-dependent hydration. This is a prerequisite for the S-specific NAD(P)H-hydrate dehydratase to allow the repair of both epimers of NAD(P)HX. In Cenarchaeum symbiosum (strain A), this protein is NAD(P)H-hydrate epimerase.